An 801-amino-acid chain; its full sequence is Phosphatidylinositol 4-phosphate 5-kinase 1 (801 aa).

The signal sequence occupies residues 1-21 (MPGLHVVSFLVVLLLQLRSSG). MORN repeat units follow at residues 41 to 63 (YVGSFDGLVPHGPGKYMWTDGAL), 64 to 86 (YDGEWDKSKMTGRGLIQWPSGAS), 87 to 109 (YEGDFRGGFIDGAGTFKGVDGSV), 110 to 132 (YKGSWRMNKKHGMGTMVYSNSDT), 133 to 155 (YEGFWNEGLPDEFGKYTWADGNV), 156 to 178 (YIGRWKSGKMNGSGVMQWINGDT), 182 to 201 (NWLNGLAHGKGYCKYASGAC), and 202 to 223 (YIGTWDRGLKDGHGTFYQPGSK). In terms of domain architecture, PIPK spans 366–797 (GHRSYYLMLN…RFISFLEKVF (432 aa)).

In terms of tissue distribution, expressed in young seedlings, shoot and seeds, and at lower level in roots, stem and leaf.

The enzyme catalyses a 1,2-diacyl-sn-glycero-3-phospho-(1D-myo-inositol 4-phosphate) + ATP = a 1,2-diacyl-sn-glycero-3-phospho-(1D-myo-inositol-4,5-bisphosphate) + ADP + H(+). In terms of biological role, involved in flowering. May suppress floral initiation by modifying the expression of genes related to floral induction. In Oryza sativa subsp. japonica (Rice), this protein is Phosphatidylinositol 4-phosphate 5-kinase 1 (PIPK1).